We begin with the raw amino-acid sequence, 227 residues long: Thiocyanate methyltransferase 1 (227 aa).

Residues tryptophan 36, tryptophan 40, tryptophan 47, and glycine 74 each coordinate S-adenosyl-L-methionine. Serine 86 is modified (phosphoserine). Residues aspartate 95, 123–124, and tyrosine 139 each bind S-adenosyl-L-methionine; that span reads DV.

The protein belongs to the class I-like SAM-binding methyltransferase superfamily. TPMT family. As to expression, expressed in shoots, leaves, stems, inflorescences, flowers and green siliques.

It carries out the reaction thiocyanate + S-adenosyl-L-methionine = methyl thiocyanate + S-adenosyl-L-homocysteine. In terms of biological role, S-adenosyl-L-methionine-dependent methyltransferase. Involved in glucosinolate metabolism and defense against phytopathogens. Highly reactive to thiocyanate (NCS(-)) derived from myrosinase-mediated hydrolysis of glucosinolates upon tissue damage. The polypeptide is Thiocyanate methyltransferase 1 (Arabidopsis thaliana (Mouse-ear cress)).